The following is a 379-amino-acid chain: Anhydro-N-acetylmuramic acid kinase (379 aa).

9–16 (GTSADGVD) provides a ligand contact to ATP.

It belongs to the anhydro-N-acetylmuramic acid kinase family.

It catalyses the reaction 1,6-anhydro-N-acetyl-beta-muramate + ATP + H2O = N-acetyl-D-muramate 6-phosphate + ADP + H(+). Its pathway is amino-sugar metabolism; 1,6-anhydro-N-acetylmuramate degradation. It participates in cell wall biogenesis; peptidoglycan recycling. Its function is as follows. Catalyzes the specific phosphorylation of 1,6-anhydro-N-acetylmuramic acid (anhMurNAc) with the simultaneous cleavage of the 1,6-anhydro ring, generating MurNAc-6-P. Is required for the utilization of anhMurNAc either imported from the medium or derived from its own cell wall murein, and thus plays a role in cell wall recycling. In Prochlorococcus marinus (strain MIT 9313), this protein is Anhydro-N-acetylmuramic acid kinase.